We begin with the raw amino-acid sequence, 422 residues long: Tyrosine--tRNA ligase (422 aa).

Tyr35 contacts L-tyrosine. Residues 40-49 (PTADSLHIGH) carry the 'HIGH' region motif. Tyr170 and Gln174 together coordinate L-tyrosine. Positions 232–236 (KFGKT) match the 'KMSKS' region motif. Residue Lys235 coordinates ATP. The 67-residue stretch at 355-421 (LTLVDLLVES…GKKKYFLVTY (67 aa)) folds into the S4 RNA-binding domain.

Belongs to the class-I aminoacyl-tRNA synthetase family. TyrS type 1 subfamily. As to quaternary structure, homodimer.

It localises to the cytoplasm. It carries out the reaction tRNA(Tyr) + L-tyrosine + ATP = L-tyrosyl-tRNA(Tyr) + AMP + diphosphate + H(+). In terms of biological role, catalyzes the attachment of tyrosine to tRNA(Tyr) in a two-step reaction: tyrosine is first activated by ATP to form Tyr-AMP and then transferred to the acceptor end of tRNA(Tyr). This is Tyrosine--tRNA ligase from Bacillus pumilus (strain SAFR-032).